The primary structure comprises 170 residues: Alpha-crystallin A chain (170 aa).

Methionine 1 carries the post-translational modification N-acetylmethionine. The tract at residues 1–63 (MDVTIQHPWF…RTALDSGISE (63 aa)) is required for complex formation with BFSP1 and BFSP2. Glutamine 6 carries the post-translational modification Deamidated glutamine; partial. Serine 45 carries the phosphoserine modification. Deamidated glutamine; partial is present on glutamine 50. The sHSP domain occupies 52 to 161 (LFRTALDSGI…GERTIPVSRE (110 aa)). Lysine 99 is modified (N6-acetyllysine). Histidine 100 lines the Zn(2+) pocket. Residue asparagine 101 is modified to Deamidated asparagine; partial. The Zn(2+) site is built by glutamate 102, histidine 107, and histidine 151. The disordered stretch occupies residues 144–170 (PKLVDPSHGERTIPVSREEKPSSAPSS). Basic and acidic residues predominate over residues 148-164 (DPSHGERTIPVSREEKP). Serine 159 carries an O-linked (GlcNAc) serine glycan.

It belongs to the small heat shock protein (HSP20) family. As to quaternary structure, heteromer composed of three CRYAA and one CRYAB subunits. Inter-subunit bridging via zinc ions enhances stability, which is crucial as there is no protein turn over in the lens. Can also form homodimers and homotetramers (dimers of dimers) which serve as the building blocks of homooligomers. Within homooligomers, the zinc-binding motif is created from residues of 3 different molecules. His-100 and Glu-102 from one molecule are ligands of the zinc ion, and His-107 and His-151 residues from additional molecules complete the site with tetrahedral coordination geometry. Part of a complex required for lens intermediate filament formation composed of BFSP1, BFSP2 and CRYAA. Acetylation at Lys-99 may increase chaperone activity. In terms of processing, undergoes age-dependent proteolytical cleavage at the C-terminus.

Its subcellular location is the cytoplasm. The protein localises to the nucleus. Functionally, contributes to the transparency and refractive index of the lens. Acts as a chaperone, preventing aggregation of various proteins under a wide range of stress conditions. Required for the correct formation of lens intermediate filaments as part of a complex composed of BFSP1, BFSP2 and CRYAA. The polypeptide is Alpha-crystallin A chain (CRYAA) (Tamandua mexicana (Northern Tamandua)).